The following is a 145-amino-acid chain: Basic phospholipase A2 cPm05 (145 aa).

The first 21 residues, 1–21, serve as a signal peptide directing secretion; that stretch reads MYPAHLLVLLAVCISLLGASA. Positions 22-27 are excised as a propeptide; sequence IPPLPL. 7 disulfide bridges follow: Cys-38-Cys-98, Cys-54-Cys-144, Cys-56-Cys-72, Cys-71-Cys-125, Cys-78-Cys-118, Cys-87-Cys-111, and Cys-105-Cys-116. Ca(2+)-binding residues include Tyr-55, Gly-57, and Gly-59. Residue His-75 is part of the active site. Residue Asp-76 participates in Ca(2+) binding. The active site involves Asp-119.

This sequence belongs to the phospholipase A2 family. Group I subfamily. D49 sub-subfamily. Ca(2+) serves as cofactor. In terms of tissue distribution, expressed by the venom gland.

It localises to the secreted. The catalysed reaction is a 1,2-diacyl-sn-glycero-3-phosphocholine + H2O = a 1-acyl-sn-glycero-3-phosphocholine + a fatty acid + H(+). In terms of biological role, PLA2 catalyzes the calcium-dependent hydrolysis of the 2-acyl groups in 3-sn-phosphoglycerides. The chain is Basic phospholipase A2 cPm05 from Laticauda semifasciata (Black-banded sea krait).